The sequence spans 266 residues: Glucosamine-6-phosphate deaminase (266 aa).

The Proton acceptor; for enolization step role is filled by aspartate 72. The For ring-opening step role is filled by aspartate 141. Catalysis depends on histidine 143, which acts as the Proton acceptor; for ring-opening step. Glutamate 148 serves as the catalytic For ring-opening step.

This sequence belongs to the glucosamine/galactosamine-6-phosphate isomerase family. NagB subfamily. As to quaternary structure, homohexamer.

It carries out the reaction alpha-D-glucosamine 6-phosphate + H2O = beta-D-fructose 6-phosphate + NH4(+). It functions in the pathway amino-sugar metabolism; N-acetylneuraminate degradation; D-fructose 6-phosphate from N-acetylneuraminate: step 5/5. Its activity is regulated as follows. Allosterically activated by N-acetylglucosamine 6-phosphate (GlcNAc6P). Its function is as follows. Catalyzes the reversible isomerization-deamination of glucosamine 6-phosphate (GlcN6P) to form fructose 6-phosphate (Fru6P) and ammonium ion. The sequence is that of Glucosamine-6-phosphate deaminase from Salmonella arizonae (strain ATCC BAA-731 / CDC346-86 / RSK2980).